The primary structure comprises 336 residues: Ribosomal RNA small subunit methyltransferase C (336 aa).

This sequence belongs to the methyltransferase superfamily. RsmC family. In terms of assembly, monomer.

It is found in the cytoplasm. It carries out the reaction guanosine(1207) in 16S rRNA + S-adenosyl-L-methionine = N(2)-methylguanosine(1207) in 16S rRNA + S-adenosyl-L-homocysteine + H(+). Specifically methylates the guanine in position 1207 of 16S rRNA in the 30S particle. The protein is Ribosomal RNA small subunit methyltransferase C of Buchnera aphidicola subsp. Schizaphis graminum (strain Sg).